Reading from the N-terminus, the 508-residue chain is Glycerol kinase (508 aa).

T14 contributes to the ADP binding site. ATP-binding residues include T14, T15, and S16. T14 provides a ligand contact to sn-glycerol 3-phosphate. R18 is an ADP binding site. Sn-glycerol 3-phosphate is bound by residues R84, E85, Y134, and D247. Glycerol contacts are provided by R84, E85, Y134, D247, and Q248. Residues T269 and G313 each coordinate ADP. T269, G313, Q317, and G416 together coordinate ATP. An ADP-binding site is contributed by G416.

Belongs to the FGGY kinase family.

It carries out the reaction glycerol + ATP = sn-glycerol 3-phosphate + ADP + H(+). It participates in polyol metabolism; glycerol degradation via glycerol kinase pathway; sn-glycerol 3-phosphate from glycerol: step 1/1. Its activity is regulated as follows. Inhibited by fructose 1,6-bisphosphate (FBP). Its function is as follows. Key enzyme in the regulation of glycerol uptake and metabolism. Catalyzes the phosphorylation of glycerol to yield sn-glycerol 3-phosphate. This is Glycerol kinase from Mycoplasmoides gallisepticum (strain R(low / passage 15 / clone 2)) (Mycoplasma gallisepticum).